The following is a 131-amino-acid chain: Leptin receptor gene-related protein (131 aa).

Helical transmembrane passes span 7–27 (LVALSFSGAIGLTFLMLGCAL), 32–52 (VYWPLFVLIFYVISPIPYFIA), 69–89 (LAYFFTTGIVVSAFGLPVVLA), and 100–120 (GLVLAGNAVIFLTIQGFFLVF).

The protein belongs to the OB-RGRP/VPS55 family. In terms of assembly, interacts with LEPR. Interacts with RAB13. In terms of tissue distribution, widely distributed in the brain, with elevated expression in the hypothalamic regions, including the paraventricular nucleus. In the placenta, present at high levels in the junctional zone situated towards the maternal aspect and throughout the labyrinth zone in close proximity to the developing fetus.

Its subcellular location is the golgi apparatus membrane. The protein resides in the endosome membrane. Negatively regulates leptin receptor (LEPR) cell surface expression, and thus decreases response to leptin. Negatively regulates growth hormone (GH) receptor cell surface expression in liver. May play a role in liver resistance to GH during periods of reduced nutrient availability. In Mus musculus (Mouse), this protein is Leptin receptor gene-related protein (Leprot).